The chain runs to 394 residues: 8-amino-7-oxononanoate synthase (394 aa).

Position 21 (R21) interacts with substrate. Pyridoxal 5'-phosphate is bound at residue 112–113; the sequence is GY. A substrate-binding site is contributed by H137. S183, H211, and T239 together coordinate pyridoxal 5'-phosphate. At K242 the chain carries N6-(pyridoxal phosphate)lysine. Position 358 (T358) interacts with substrate.

Belongs to the class-II pyridoxal-phosphate-dependent aminotransferase family. BioF subfamily. In terms of assembly, homodimer. It depends on pyridoxal 5'-phosphate as a cofactor.

It carries out the reaction 6-carboxyhexanoyl-[ACP] + L-alanine + H(+) = (8S)-8-amino-7-oxononanoate + holo-[ACP] + CO2. The protein operates within cofactor biosynthesis; biotin biosynthesis. Its function is as follows. Catalyzes the decarboxylative condensation of pimeloyl-[acyl-carrier protein] and L-alanine to produce 8-amino-7-oxononanoate (AON), [acyl-carrier protein], and carbon dioxide. This is 8-amino-7-oxononanoate synthase from Paraburkholderia phymatum (strain DSM 17167 / CIP 108236 / LMG 21445 / STM815) (Burkholderia phymatum).